Reading from the N-terminus, the 429-residue chain is 3-phosphoshikimate 1-carboxyvinyltransferase (429 aa).

Positions 23, 24, and 28 each coordinate 3-phosphoshikimate. K23 provides a ligand contact to phosphoenolpyruvate. Phosphoenolpyruvate contacts are provided by G95 and R123. The 3-phosphoshikimate site is built by S168, Q170, D316, and K343. Phosphoenolpyruvate is bound at residue Q170. D316 serves as the catalytic Proton acceptor. Residues R347 and R389 each coordinate phosphoenolpyruvate.

The protein belongs to the EPSP synthase family. In terms of assembly, monomer.

It is found in the cytoplasm. It carries out the reaction 3-phosphoshikimate + phosphoenolpyruvate = 5-O-(1-carboxyvinyl)-3-phosphoshikimate + phosphate. Its pathway is metabolic intermediate biosynthesis; chorismate biosynthesis; chorismate from D-erythrose 4-phosphate and phosphoenolpyruvate: step 6/7. Its function is as follows. Catalyzes the transfer of the enolpyruvyl moiety of phosphoenolpyruvate (PEP) to the 5-hydroxyl of shikimate-3-phosphate (S3P) to produce enolpyruvyl shikimate-3-phosphate and inorganic phosphate. This Bacillus anthracis (strain A0248) protein is 3-phosphoshikimate 1-carboxyvinyltransferase.